The sequence spans 134 residues: Small ribosomal subunit protein bS16 (134 aa).

Residues 79-134 (AGIAKRPSRNNPTKGEPGKKAQERLALAKQAEEEAAAKAAEAAAAAAAPAEEAASE) form a disordered region. The segment covering 115–134 (AKAAEAAAAAAAPAEEAASE) has biased composition (low complexity).

This sequence belongs to the bacterial ribosomal protein bS16 family.

The protein is Small ribosomal subunit protein bS16 of Brucella canis (strain ATCC 23365 / NCTC 10854 / RM-666).